The following is a 105-amino-acid chain: Large ribosomal subunit protein uL23 (105 aa).

It belongs to the universal ribosomal protein uL23 family. Part of the 50S ribosomal subunit. Contacts protein L29, and trigger factor when it is bound to the ribosome.

Functionally, one of the early assembly proteins it binds 23S rRNA. One of the proteins that surrounds the polypeptide exit tunnel on the outside of the ribosome. Forms the main docking site for trigger factor binding to the ribosome. The protein is Large ribosomal subunit protein uL23 of Janthinobacterium sp. (strain Marseille) (Minibacterium massiliensis).